The primary structure comprises 190 residues: Holliday junction branch migration complex subunit RuvA (190 aa).

The tract at residues Met1–Gly64 is domain I. Residues Thr65–Gly137 form a domain II region. The segment at Gly137–His141 is flexible linker. The domain III stretch occupies residues Ala142–Arg190.

The protein belongs to the RuvA family. Homotetramer. Forms an RuvA(8)-RuvB(12)-Holliday junction (HJ) complex. HJ DNA is sandwiched between 2 RuvA tetramers; dsDNA enters through RuvA and exits via RuvB. An RuvB hexamer assembles on each DNA strand where it exits the tetramer. Each RuvB hexamer is contacted by two RuvA subunits (via domain III) on 2 adjacent RuvB subunits; this complex drives branch migration. In the full resolvosome a probable DNA-RuvA(4)-RuvB(12)-RuvC(2) complex forms which resolves the HJ.

It is found in the cytoplasm. Its function is as follows. The RuvA-RuvB-RuvC complex processes Holliday junction (HJ) DNA during genetic recombination and DNA repair, while the RuvA-RuvB complex plays an important role in the rescue of blocked DNA replication forks via replication fork reversal (RFR). RuvA specifically binds to HJ cruciform DNA, conferring on it an open structure. The RuvB hexamer acts as an ATP-dependent pump, pulling dsDNA into and through the RuvAB complex. HJ branch migration allows RuvC to scan DNA until it finds its consensus sequence, where it cleaves and resolves the cruciform DNA. The chain is Holliday junction branch migration complex subunit RuvA from Bordetella avium (strain 197N).